Consider the following 52-residue polypeptide: Stable plasmid inheritance protein (52 aa).

The chain crosses the membrane as a helical span at residues 6 to 26 (SSLVWCVLIVCLTLLIFTYLT).

This sequence belongs to the Hok/Gef family.

It is found in the cell inner membrane. Toxic component of a type I toxin-antitoxin (TA) system. Part of the plasmid maintenance system, encodes a toxic protein that collapses the transmembrane potential and arrests respiration. When the adjacent non-translated flmB (sok) gene is disrupted FlmA no longer functions in plasmid maintenance (i.e. FlmB probably encodes an antisense antitoxin RNA). Translation of FlmA may be coupled to the upstream flmC gene. This is Stable plasmid inheritance protein (flmA) from Escherichia coli O157:H7.